Here is a 264-residue protein sequence, read N- to C-terminus: Hydroxyethylthiazole kinase (264 aa).

M40 contacts substrate. K116 and T161 together coordinate ATP. A substrate-binding site is contributed by G188.

This sequence belongs to the Thz kinase family. Requires Mg(2+) as cofactor.

It carries out the reaction 5-(2-hydroxyethyl)-4-methylthiazole + ATP = 4-methyl-5-(2-phosphooxyethyl)-thiazole + ADP + H(+). Its pathway is cofactor biosynthesis; thiamine diphosphate biosynthesis; 4-methyl-5-(2-phosphoethyl)-thiazole from 5-(2-hydroxyethyl)-4-methylthiazole: step 1/1. In terms of biological role, catalyzes the phosphorylation of the hydroxyl group of 4-methyl-5-beta-hydroxyethylthiazole (THZ). The polypeptide is Hydroxyethylthiazole kinase (Staphylococcus carnosus (strain TM300)).